Reading from the N-terminus, the 165-residue chain is Growth arrest and DNA damage-inducible protein GADD45 alpha (165 aa).

T2 carries the phosphothreonine modification.

This sequence belongs to the GADD45 family. Interacts with AURKA, GADD45GIP1 and PCNA. Interacts with MAPK14.

Its subcellular location is the nucleus. Might affect PCNA interaction with some CDK (cell division protein kinase) complexes; stimulates DNA excision repair in vitro and inhibits entry of cells into S phase. In T-cells, functions as a regulator of p38 MAPKs by inhibiting p88 phosphorylation and activity. This chain is Growth arrest and DNA damage-inducible protein GADD45 alpha (Gadd45a), found in Mus musculus (Mouse).